The primary structure comprises 316 residues: Thymidylate synthase (316 aa).

Residues Arg23 and 178–179 (RR) contribute to the dUMP site. Cys198 acts as the Nucleophile in catalysis. DUMP-binding positions include 218–221 (RSAD), Asn229, and 259–261 (HIY). Position 221 (Asp221) interacts with (6R)-5,10-methylene-5,6,7,8-tetrahydrofolate. Residue Ala315 participates in (6R)-5,10-methylene-5,6,7,8-tetrahydrofolate binding.

Belongs to the thymidylate synthase family. Bacterial-type ThyA subfamily. In terms of assembly, homodimer.

It is found in the cytoplasm. It carries out the reaction dUMP + (6R)-5,10-methylene-5,6,7,8-tetrahydrofolate = 7,8-dihydrofolate + dTMP. Its pathway is pyrimidine metabolism; dTTP biosynthesis. Catalyzes the reductive methylation of 2'-deoxyuridine-5'-monophosphate (dUMP) to 2'-deoxythymidine-5'-monophosphate (dTMP) while utilizing 5,10-methylenetetrahydrofolate (mTHF) as the methyl donor and reductant in the reaction, yielding dihydrofolate (DHF) as a by-product. This enzymatic reaction provides an intracellular de novo source of dTMP, an essential precursor for DNA biosynthesis. The polypeptide is Thymidylate synthase (Levilactobacillus brevis (strain ATCC 367 / BCRC 12310 / CIP 105137 / JCM 1170 / LMG 11437 / NCIMB 947 / NCTC 947) (Lactobacillus brevis)).